The following is a 177-amino-acid chain: Large ribosomal subunit protein uL10 (177 aa).

The protein belongs to the universal ribosomal protein uL10 family. In terms of assembly, part of the ribosomal stalk of the 50S ribosomal subunit. The N-terminus interacts with L11 and the large rRNA to form the base of the stalk. The C-terminus forms an elongated spine to which L12 dimers bind in a sequential fashion forming a multimeric L10(L12)X complex.

Its function is as follows. Forms part of the ribosomal stalk, playing a central role in the interaction of the ribosome with GTP-bound translation factors. This Legionella pneumophila (strain Paris) protein is Large ribosomal subunit protein uL10.